Reading from the N-terminus, the 100-residue chain is MNLTPREKDKLLIAMAAEVARKRRARGVKLNHPEAIALISDAVVEGARDGRSVADLMQAGAEVIRAEDCMEGIAQMILEVQVEATFPDGTKLVTVHNPIR.

This sequence belongs to the urease gamma subunit family. As to quaternary structure, heterotrimer of UreA (gamma), UreB (beta) and UreC (alpha) subunits. Three heterotrimers associate to form the active enzyme.

It localises to the cytoplasm. It catalyses the reaction urea + 2 H2O + H(+) = hydrogencarbonate + 2 NH4(+). It functions in the pathway nitrogen metabolism; urea degradation; CO(2) and NH(3) from urea (urease route): step 1/1. The protein is Urease subunit gamma of Ruegeria pomeroyi (strain ATCC 700808 / DSM 15171 / DSS-3) (Silicibacter pomeroyi).